The sequence spans 829 residues: Leucine--tRNA ligase (829 aa).

The 'HIGH' region signature appears at 40–50 (PYPSGNIHMGH). Residues 581–585 (KMSKS) carry the 'KMSKS' region motif. Lys584 is an ATP binding site.

It belongs to the class-I aminoacyl-tRNA synthetase family.

It is found in the cytoplasm. The enzyme catalyses tRNA(Leu) + L-leucine + ATP = L-leucyl-tRNA(Leu) + AMP + diphosphate. This Oleidesulfovibrio alaskensis (strain ATCC BAA-1058 / DSM 17464 / G20) (Desulfovibrio alaskensis) protein is Leucine--tRNA ligase.